The chain runs to 1709 residues: MRTRFLATDYFAPSSSSAAGKALALEFFSFPSLPVPALPPDPHFLPFTSADELPAATVADDGLGPLPIASALSDFLAAVIPQALPVPTVPAADEVLDDFLYDRGGYGEDFSSWEFGAFRIPKASEGYGVINREKDEKGEGSRSDGLEISSVMKRWEQLKELRFEVVEVDLLMALQEDIASFGEEESGGGVTLLLRVPDMKIHLDFIDIETDIKIRYQSDLPESVYQVEKVPVKDNDGNGHSSLREDCCLEIAALDHGAVIPRLEVSRNSWELDDCLTETDRYGVFDNVVRHLDEAQIQHSVFKSTEFLRSTDMDMLTFVCEDAPCHDIQVDKPAEIKAAVEMDVVRINGNILLEKNSALYPLKPDGTCSDLPCSILLEEVQIIDFPSDNVFKMLVQSETNKMNISDEIFKDDFDPARRLYESMVSCELALVDDTFRSLPTPILNDDIAVRSRVPPIQEILCSLKPHPLSASDGIYLDWHLLLEGPCNREICCSYASMVEEAKTCHLSSELQRSCQSTSVFVSDFLEDFQRSPKLQDEDKHSDIYVPAPLSHDPQKLEATQKCEQEGGTRNHSSMKRPSPEKSSSFPELISHSGDLNFYLNVRSATKSGTNNENTSTLDVPHSEEQALSLSTRAKVDKLIEIHPVSPSNLIQGLIEQIHASYTSALQESTYWRHSFSDEQGLGISKQKLLELITGEGSEGSYNHCEHKDKMELIVLYALKQVAYYLCFFGLHAAHLYISNLTRSLENTPERLKHILWSISEAQRKSERQLFESHPSLSCIETILRSNKQIDQKILIVADRAFWLPLGQKLASMRMTFVEFGQNPATTFVDLVNKTNSTAWVLEELLKSDCILLDNKNIPASFPFDKFGIILEYGGPNKSSTLLSLAPKLDGLPPLHFLYVKVDGKDFPAALVEDNHKDQDLKSTLDKVLLTLQKDLQERMNKMRIVDSLNFIPATNQLQGLQEKRSKHFAADATKELLPDDQPHRLQNLNKKNTFDSHNVVLADEQLHIQQTLSNKPVVNSQCVPTVEKSSSTSSVSANVLKDPQENQSTTDLPSCVKNDCIMPGRLSVPDVVIVVNTGNHGKTMLVSRRSSYQQILALEKGGMQVVERDIDLPVDLILSAAVCLVWYETALFEANELTTSAETSGIKENVENIATNILMSVSFSFTGCIMVFEGEADFLSAVMDSSDSLYTAAASLDMNLQLFFSHTPRSTDEIILNCITNVTSCYKAPLPDIPESESLAESFLTSFPSINPVSAYMLLSSGGSLVEFLSWPHERRIQAVGKYLLSPKIISLFNALCKFGELGESRSVMTECSSVDSDISSAFLQSPRKRKQRSLQACAVPTNKLLFSDSLNQIPGDYAEHAEVFSPSKLRKFSDMDNTIPELPDVFTFDESLNMRSEGFSYQQKKHDVDAIPGNQVINDDFSNGLTPNNQAYNRRTGNMVDTFDLPWQPEFGGTHPSKSTFHTSRPSCSRTHSNPVFSTAFEINDDPGEWNISGGTKQTWKGLAHGGTVDDSYRYDMDNRYHEPRDEIMQHPASSLAFQKLDFGSHATSQGSCWEIDYLRQMSAKRKARQERSRCSNSPGMSIPRMRDSNSKILNPPPKESFRYRGDRDTPSRDQSPSIGTQHYGKGKEGAKAQNRRARKDFNVQPTSHKKRIEPSIDPTWTPIDKRARQKLSFVTYGKEKQSKLVWRNQNSPGVGCGFRKRFREEGT.

3 stretches are compositionally biased toward basic and acidic residues: residues 532–542 (PKLQDEDKHSD), 552–568 (DPQK…EGGT), and 1601–1613 (ESFR…DTPS). Disordered stretches follow at residues 532-586 (PKLQ…SSFP) and 1566-1662 (KRKA…DPTW).

It belongs to the XPF family. In terms of assembly, interacts (via C-terminus) with PTD. Interacts with ZIP4. In terms of tissue distribution, highly expressed in anthers and pistil during meiosis. Expressed in pollen mother cells (PMCs) during meiosis. Expressed at low levels in roots, shoots, leaves, flowers, and glumes.

It localises to the chromosome. The protein localises to the nucleus. Its subcellular location is the cytoplasm. It is found in the cell membrane. Essential for normal crossover (CO) formation during meiosis. Essential component for the formation of class I meiotic COs. Interacts with PTD, another meiotic component, to regulate CO formation, possibly by stabilizing the recombination intermediates during meiosis. SHOC1 and PTD may form transient heterotrimeric or heterotetrameric complexes with HEI10 and/or ZIP4 to promote class I COs formation. Does not seem to be involved in early meiotic recombination steps involving double-strand break (DSB) formation, processing, and single-strand invasion. Does not seem to be involved in homologous pairing or synaptonemal complex (SC) assembly. The sequence is that of Protein SHORTAGE IN CHIASMATA 1 homolog from Oryza sativa subsp. japonica (Rice).